The chain runs to 335 residues: Homeobox protein unc-39 (335 aa).

2 disordered regions span residues 27–56 (FTSSSNSNTSNSSTSPSHISDQFSSSGGPP) and 269–294 (RRQRDKSNNSAKCSPPSSSSSTNGGS). A compositionally biased stretch (low complexity) spans 28–41 (TSSSNSNTSNSSTS). A compositionally biased stretch (polar residues) spans 42–53 (PSHISDQFSSSG). Residues 225–277 (KDSSRKFLKQFFRNVSEYPTQEQKREISRATGLKIVQISNWFKNRRQRDKSNN) constitute a DNA-binding region (homeobox). Positions 276–294 (NNSAKCSPPSSSSSTNGGS) are enriched in low complexity.

Belongs to the SIX/Sine oculis homeobox family.

It is found in the nucleus. Its function is as follows. Probable transcription factor required for differentiation and migration of neuronal cells, such as RID and CAN neurons. Specifically, plays a role in the terminal differentiation of RID peptidergic neurons. Also required for CAN neuron axon guidance. In Caenorhabditis elegans, this protein is Homeobox protein unc-39.